Consider the following 372-residue polypeptide: Gibberellin 20 oxidase 1 (372 aa).

A Fe2OG dioxygenase domain is found at 209-309 (RNDSIMRLNY…RRSLAFFLCP (101 aa)). Fe cation is bound by residues His234, Asp236, and His290. Residue Arg300 is part of the active site.

Belongs to the iron/ascorbate-dependent oxidoreductase family. GA20OX subfamily. Fe(2+) serves as cofactor. L-ascorbate is required as a cofactor. Preferentially expressed in reproductive organs. Expressed in the epithelium of embryos and the tapetum of anthers. Expressed at low levels in the shoot apical meristem.

It carries out the reaction gibberellin A12 + 2 2-oxoglutarate + 3 O2 + H(+) = gibberellin A9 + 2 succinate + 3 CO2 + 2 H2O. It catalyses the reaction gibberellin A53 + 2 2-oxoglutarate + 3 O2 + H(+) = gibberellin A20 + 2 succinate + 3 CO2 + 2 H2O. Key oxidase enzyme in the biosynthesis of gibberellin. Catalyzes the conversion of GA12 and GA53 to GA9 and GA20 respectively, via a three-step oxidation at C-20 of the GA skeleton. The polypeptide is Gibberellin 20 oxidase 1 (Oryza sativa subsp. japonica (Rice)).